The following is a 356-amino-acid chain: 5-formaminoimidazole-4-carboxamide-1-(beta)-D-ribofuranosyl 5'-monophosphate synthetase 2 (356 aa).

Residues His-27 and Ser-94 each contribute to the 5-amino-1-(5-phospho-beta-D-ribosyl)imidazole-4-carboxamide site. An ATP-grasp domain is found at 101–333; it reads RENFTGMAVP…YSDLMQKRLS (233 aa). Residues 145–196 and Glu-226 contribute to the ATP site; that span reads PHDI…TRYD. Position 255 (Asn-255) interacts with 5-amino-1-(5-phospho-beta-D-ribosyl)imidazole-4-carboxamide. Glu-293 and Glu-306 together coordinate Mg(2+).

This sequence belongs to the phosphohexose mutase family. Requires Mg(2+) as cofactor. Mn(2+) serves as cofactor.

The enzyme catalyses 5-amino-1-(5-phospho-beta-D-ribosyl)imidazole-4-carboxamide + formate + ATP = 5-formamido-1-(5-phospho-D-ribosyl)imidazole-4-carboxamide + ADP + phosphate. Its pathway is purine metabolism; IMP biosynthesis via de novo pathway; 5-formamido-1-(5-phospho-D-ribosyl)imidazole-4-carboxamide from 5-amino-1-(5-phospho-D-ribosyl)imidazole-4-carboxamide (formate route): step 1/1. Its function is as follows. Catalyzes the ATP- and formate-dependent formylation of 5-aminoimidazole-4-carboxamide-1-beta-d-ribofuranosyl 5'-monophosphate (AICAR) to 5-formaminoimidazole-4-carboxamide-1-beta-d-ribofuranosyl 5'-monophosphate (FAICAR) in the absence of folates. This Methanosarcina mazei (strain ATCC BAA-159 / DSM 3647 / Goe1 / Go1 / JCM 11833 / OCM 88) (Methanosarcina frisia) protein is 5-formaminoimidazole-4-carboxamide-1-(beta)-D-ribofuranosyl 5'-monophosphate synthetase 2.